Reading from the N-terminus, the 335-residue chain is Carboxylesterase 1 (335 aa).

An Involved in the stabilization of the negatively charged intermediate by the formation of the oxyanion hole motif is present at residues 90 to 92 (HGG). Paraoxon is bound by residues 92–93 (GG), S169, and A170. Residue S169 is part of the active site. Catalysis depends on residues D276 and H306.

Belongs to the 'GDXG' lipolytic enzyme family.

It catalyses the reaction a carboxylic ester + H2O = an alcohol + a carboxylate + H(+). With respect to regulation, is inhibited by the organophosphates paraoxon and dimethylchlorophosphate (DMCP). Its function is as follows. Carboxylesterase acting on esters with varying acyl chain length. In Actinidia eriantha (Velvet vine), this protein is Carboxylesterase 1 (CXE1).